The primary structure comprises 138 residues: Transcription antitermination protein NusB (138 aa).

This sequence belongs to the NusB family.

Its function is as follows. Involved in transcription antitermination. Required for transcription of ribosomal RNA (rRNA) genes. Binds specifically to the boxA antiterminator sequence of the ribosomal RNA (rrn) operons. This Leptospira borgpetersenii serovar Hardjo-bovis (strain JB197) protein is Transcription antitermination protein NusB.